The sequence spans 447 residues: Teichoic acids export ATP-binding protein TagH (447 aa).

Positions 24–246 (DKLKTLFSVF…YRAFLHRYNH (223 aa)) constitute an ABC transporter domain. 60-67 (GLNGSGKS) provides a ligand contact to ATP. The segment at 247–447 (FTEPQKESYQ…QVLKLKEVTE (201 aa)) is unknown. Residues 359-393 (NAVKTTKTKPASTKESRQQEEVQPSPTNVPENNNS) form a disordered region. 2 stretches are compositionally biased toward polar residues: residues 360–369 (AVKTTKTKPA) and 379–393 (EVQP…NNNS). Positions 398–442 (STYTVEVGDSVSLIAENHGLTIEQLQTLNPEIIEVPIYPGQVLKL) constitute a LysM domain.

Belongs to the ABC transporter superfamily. Teichoic acids exporter (TC 3.A.1.104.1) family. In terms of assembly, the complex is composed of two ATP-binding proteins (TagH) and two transmembrane proteins (TagG).

It localises to the cell membrane. It carries out the reaction ATP + H2O + teichoic acidSide 1 = ADP + phosphate + teichoic acidSide 2.. In terms of biological role, part of the ABC transporter complex TagGH involved in teichoic acids export. Responsible for energy coupling to the transport system. The protein is Teichoic acids export ATP-binding protein TagH of Enterococcus faecalis (strain ATCC 700802 / V583).